A 461-amino-acid chain; its full sequence is MASSLPLLPKPISPFFKTPPFSTSKPLVFLNFQTRLTSRSSDVSVNLKKKNNPWLDPFDSGEDPDNEYGSLFADGKQDEDPRPPDNPDNPYGFLKFPKGYTVELASLPLKIRGDVRRCCCVISGGVYENLLFFPTIQLIKDRYPGVQVDILTTERGKQTYELNKNVRWANVYDPDDHWPEPAEYTDMIGLLKGRYYDMVLSTKLAGLGHAAFLFMTTARDRVSYIYPNVNSAGAGLMLSETFTAENTNLSELGYSMYTQMEDWLGRPFRSVPRTPLLPLRVSISRKVKEVVAAKYRNAGAVTGKFIVIHGIESDSKASMQSKGDADSLLSLEKWAKIIKGVRGFKPVFVIPHEKERENVEDFVGDDTSIVFITTPGQLAALINDSAGVIATNTAAIQLANARDKPCIGLFSSEEKGKLFVPYAEEKSNCVIIASKTGKLADIDIGTVKNAMQVFEGSLALV.

The transit peptide at 1-44 directs the protein to the chloroplast; the sequence is MASSLPLLPKPISPFFKTPPFSTSKPLVFLNFQTRLTSRSSDVS. Positions 66–90 are disordered; that stretch reads NEYGSLFADGKQDEDPRPPDNPDNP. Residues 75 to 85 show a composition bias toward basic and acidic residues; that stretch reads GKQDEDPRPPD.

Part of the chloroplast NDH complex, composed of a mixture of chloroplast and nucleus encoded subunits. Component of the NDH subcomplex B, at least composed of PnsB1, PnsB2, PnsB3, PnsB4 and PnsB5.

The protein localises to the plastid. It localises to the chloroplast thylakoid membrane. Its function is as follows. NDH shuttles electrons from NAD(P)H:plastoquinone, via FMN and iron-sulfur (Fe-S) centers, to quinones in the photosynthetic chain and possibly in a chloroplast respiratory chain. The immediate electron acceptor for the enzyme in this species is believed to be plastoquinone. Couples the redox reaction to proton translocation, and thus conserves the redox energy in a proton gradient. This Arabidopsis thaliana (Mouse-ear cress) protein is Photosynthetic NDH subunit of subcomplex B 1, chloroplastic.